The primary structure comprises 206 residues: Large ribosomal subunit protein uL4 (206 aa).

The tract at residues 48 to 97 (THAVKNRSLVSGGGKKPWKQKHTGRARQGSTRASQWVGGGKAMGPKPRDY) is disordered. The segment covering 63–72 (KPWKQKHTGR) has biased composition (basic residues).

The protein belongs to the universal ribosomal protein uL4 family. In terms of assembly, part of the 50S ribosomal subunit.

Functionally, one of the primary rRNA binding proteins, this protein initially binds near the 5'-end of the 23S rRNA. It is important during the early stages of 50S assembly. It makes multiple contacts with different domains of the 23S rRNA in the assembled 50S subunit and ribosome. In terms of biological role, forms part of the polypeptide exit tunnel. The chain is Large ribosomal subunit protein uL4 from Anaeromyxobacter dehalogenans (strain 2CP-C).